The sequence spans 426 residues: Enolase (426 aa).

The disordered stretch occupies residues 32-53 (TGRAAVPSGASTGAYEAHEQRD). Q163 is a binding site for (2R)-2-phosphoglycerate. E205 (proton donor) is an active-site residue. Residues D242, E285, and D312 each contribute to the Mg(2+) site. (2R)-2-phosphoglycerate contacts are provided by K337, R366, S367, and K388. Catalysis depends on K337, which acts as the Proton acceptor.

It belongs to the enolase family. Mg(2+) serves as cofactor.

The protein localises to the cytoplasm. It localises to the secreted. Its subcellular location is the cell surface. It catalyses the reaction (2R)-2-phosphoglycerate = phosphoenolpyruvate + H2O. It functions in the pathway carbohydrate degradation; glycolysis; pyruvate from D-glyceraldehyde 3-phosphate: step 4/5. In terms of biological role, catalyzes the reversible conversion of 2-phosphoglycerate (2-PG) into phosphoenolpyruvate (PEP). It is essential for the degradation of carbohydrates via glycolysis. In Hyphomonas neptunium (strain ATCC 15444), this protein is Enolase.